The following is a 793-amino-acid chain: Serine/threonine-protein phosphatase 1 regulatory subunit GAC1 (793 aa).

Residues 1-10 (MVIQTATTLS) show a composition bias toward polar residues. Residues 1 to 20 (MVIQTATTLSPAKARPSFPH) are disordered. One can recognise a CBM21 domain in the interval 235-360 (TKYLNGQNVK…NNNGKNYHLF (126 aa)). Phosphoserine is present on residues Ser415 and Ser424. Disordered regions lie at residues 450–491 (LENA…SIDL) and 616–671 (TTMD…LNDH). The segment covering 623-633 (KTSTINNSTDT) has biased composition (polar residues). The span at 637–648 (PSKENGTVKENK) shows a compositional bias: basic and acidic residues. The span at 649-665 (SSANSTSAPSSSQNRAS) shows a compositional bias: low complexity.

Regulates the activity of glycogen synthase. It is most probably a regulatory subunit for protein phosphatase type 1. The protein is Serine/threonine-protein phosphatase 1 regulatory subunit GAC1 (GAC1) of Saccharomyces cerevisiae (strain ATCC 204508 / S288c) (Baker's yeast).